The following is a 101-amino-acid chain: MSRRRRRASATRRSAAVSPPHTPYGSGCISACSWHSTITGHRAQTRLAASSRASRAAVGSFDGAKNRPASSRRQAASECQGPASSSRAGVRWAGTAANGRG.

The span at 1-10 shows a compositional bias: basic residues; that stretch reads MSRRRRRASA. Disordered stretches follow at residues 1-26 and 45-101; these read MSRRRRRASATRRSAAVSPPHTPYGS and TRLA…NGRG. Residues 45-60 show a composition bias toward low complexity; it reads TRLAASSRASRAAVGS. The segment at residues 55–74 is a DNA-binding region (H-T-H motif); sequence RAAVGSFDGAKNRPASSRRQ.

Functionally, increases the production of several extracellular enzymes, like alkaline phosphatase, amylase, protease or lipase. When present in high concentrations, delays the production of pigments and sporulation. In Streptomyces griseus, this protein is Secreted enzymes activator (saf).